We begin with the raw amino-acid sequence, 172 residues long: Adenine phosphoribosyltransferase (172 aa).

The protein belongs to the purine/pyrimidine phosphoribosyltransferase family. As to quaternary structure, homodimer.

The protein resides in the cytoplasm. It carries out the reaction AMP + diphosphate = 5-phospho-alpha-D-ribose 1-diphosphate + adenine. Its pathway is purine metabolism; AMP biosynthesis via salvage pathway; AMP from adenine: step 1/1. Catalyzes a salvage reaction resulting in the formation of AMP, that is energically less costly than de novo synthesis. In Desulforamulus reducens (strain ATCC BAA-1160 / DSM 100696 / MI-1) (Desulfotomaculum reducens), this protein is Adenine phosphoribosyltransferase.